Consider the following 163-residue polypeptide: Nucleotide-binding protein LBJ_2391 (163 aa).

The protein belongs to the YajQ family.

Functionally, nucleotide-binding protein. The polypeptide is Nucleotide-binding protein LBJ_2391 (Leptospira borgpetersenii serovar Hardjo-bovis (strain JB197)).